A 235-amino-acid chain; its full sequence is Small ribosomal subunit protein uS3 (235 aa).

In terms of domain architecture, KH type-2 spans 39 to 107 (IRTYIENELK…ETHLNIVEVR (69 aa)). A disordered region spans residues 215 to 235 (SERRAVEGAGDGGGQRRRENA).

Belongs to the universal ribosomal protein uS3 family. As to quaternary structure, part of the 30S ribosomal subunit. Forms a tight complex with proteins S10 and S14.

Binds the lower part of the 30S subunit head. Binds mRNA in the 70S ribosome, positioning it for translation. The sequence is that of Small ribosomal subunit protein uS3 from Chelativorans sp. (strain BNC1).